The sequence spans 77 residues: Conotoxin Ar5.1 b (77 aa).

An N-terminal signal peptide occupies residues 1–19 (MLCLPVFIILLLLASPAAS). Residues 20-44 (NPLKTRIQSDLIRAALEDADMKNEK) constitute a propeptide that is removed on maturation.

It belongs to the conotoxin T superfamily. Post-translationally, contains 2 disulfide bonds that can be either 'C1-C3, C2-C4' or 'C1-C4, C2-C3', since these disulfide connectivities have been observed for conotoxins with cysteine framework V (for examples, see AC P0DQQ7 and AC P81755). Expressed by the venom duct.

The protein resides in the secreted. This Conus arenatus (Sand-dusted cone) protein is Conotoxin Ar5.1 b.